The following is a 379-amino-acid chain: L-lactate dehydrogenase (379 aa).

In terms of domain architecture, FMN hydroxy acid dehydrogenase spans 1–379 (MIISASTDYR…IGRDSLVNLP (379 aa)). Position 24 (Tyr24) interacts with substrate. Residues Ser106 and Gln127 each coordinate FMN. Tyr129 serves as a coordination point for substrate. Thr155 provides a ligand contact to FMN. Arg164 lines the substrate pocket. An FMN-binding site is contributed by Lys251. The active-site Proton acceptor is the His275. Arg278 contributes to the substrate binding site. 306–330 (DSGIRTGLDVVRMLALGADTVLLGR) serves as a coordination point for FMN.

Belongs to the FMN-dependent alpha-hydroxy acid dehydrogenase family. It depends on FMN as a cofactor.

The protein resides in the cell inner membrane. The enzyme catalyses (S)-lactate + A = pyruvate + AH2. Its function is as follows. Catalyzes the conversion of L-lactate to pyruvate. Is coupled to the respiratory chain. The protein is L-lactate dehydrogenase of Stenotrophomonas maltophilia (strain R551-3).